The sequence spans 1252 residues: Guanine nucleotide exchange factor SDC25 (1252 aa).

In terms of domain architecture, SH3 spans Gln-26–Asn-97. 2 disordered regions span residues Ile-409 to Trp-454 and Leu-623 to Glu-648. Positions Thr-416 to Ser-428 are enriched in low complexity. In terms of domain architecture, N-terminal Ras-GEF spans Ser-782–Lys-914. In terms of domain architecture, Ras-GEF spans Asp-952–Lys-1199. Residues Arg-1201–Lys-1252 are disordered. Residues Ser-1214–Ser-1236 show a composition bias toward basic and acidic residues. Residues Gln-1239–Lys-1252 are compositionally biased toward basic residues.

In terms of biological role, promotes the exchange of Ras-bound GDP by GTP. This Saccharomyces cerevisiae (strain RM11-1a) (Baker's yeast) protein is Guanine nucleotide exchange factor SDC25 (SDC25).